The following is a 646-amino-acid chain: DEAD-box ATP-dependent RNA helicase 52 (646 aa).

Disordered stretches follow at residues 1–64 (MSSN…ANSG) and 76–117 (GSGY…PAVN). Position 2 is an N-acetylserine (Ser-2). 2 stretches are compositionally biased toward gly residues: residues 54-64 (DRGGYGGANSG) and 76-87 (GSGYGGRGGPVG). A Q motif motif is present at residues 146 to 174 (NTFAEIDLGEALNLNIQRCKYVKPTPVQR). A Helicase ATP-binding domain is found at 177–361 (IPILAAGRDL…SDFLSNYIFL (185 aa)). Residue 190 to 197 (AQTGSGKT) coordinates ATP. The DEAD box motif lies at 305-308 (DEAD). Positions 388–539 (HLMDLLHAQR…EVPDWLTRYA (152 aa)) constitute a Helicase C-terminal domain.

Belongs to the DEAD box helicase family. DDX3/DED1 subfamily.

It carries out the reaction ATP + H2O = ADP + phosphate + H(+). This chain is DEAD-box ATP-dependent RNA helicase 52 (RH52), found in Arabidopsis thaliana (Mouse-ear cress).